The chain runs to 86 residues: Large ribosomal subunit protein uL23 (86 aa).

This sequence belongs to the universal ribosomal protein uL23 family. Part of the 50S ribosomal subunit. Contacts protein L29.

Functionally, binds to 23S rRNA. One of the proteins that surrounds the polypeptide exit tunnel on the outside of the ribosome. This chain is Large ribosomal subunit protein uL23, found in Pyrococcus furiosus (strain ATCC 43587 / DSM 3638 / JCM 8422 / Vc1).